Reading from the N-terminus, the 139-residue chain is Large ribosomal subunit protein bL17 (139 aa).

Belongs to the bacterial ribosomal protein bL17 family. Part of the 50S ribosomal subunit. Contacts protein L32.

The sequence is that of Large ribosomal subunit protein bL17 from Afipia carboxidovorans (strain ATCC 49405 / DSM 1227 / KCTC 32145 / OM5) (Oligotropha carboxidovorans).